Here is a 623-residue protein sequence, read N- to C-terminus: Protein EDS1 (623 aa).

An N-acetylalanine modification is found at Ala-2. The active-site Nucleophile is the Ser-123. Catalysis depends on charge relay system residues Asp-187 and His-317. The stretch at 358-383 forms a coiled coil; it reads VQAALEEEKKRVENQKKIIQVIEQER.

Homodimer. Interacts with RPS4, RPS6, SNC1, SRFR1, AvrRps4 and HopA1. Part of a nuclear complex made of EDS1, PAD4 and SAG101, that can be redirected to the cytoplasm in the presence of an extranuclear form of EDS1. Interacts (via N-terminus) with PAD4 (via N-terminus). Interacts (via N-terminus) with SAG101. EDS1-SAG101 and EDS1-PAD4 form separate complexes in pathogen-unchallenged cells. Part of a nuclear protein complex made of VICTR, PAD4 and EDS1. Interacts with VICTR.

The protein resides in the nucleus. Its subcellular location is the cytoplasm. It localises to the microsome. Its function is as follows. Positive regulator of basal resistance and of effector-triggered immunity specifically mediated by TIR-NB-LRR (TNL) resistance proteins. Disruption by bacterial effector of EDS1-TIR-NB-LRR resistance protein interactions constitutes the first step in resistance activation. Acts redundantly with salicylic acid to regulate resistance gene-mediated signaling. Triggers early plant defenses and hypersensitive response independently of PAD4, and then recruits PAD4 to potentiate plant defenses through the accumulation of salicylic acid. Nuclear localization is essential for basal and TNL-conditioned immunity and for reprogramming defense gene expression, while cytoplasmic EDS1 is required to induce a complete immune response. Heterodimerization with PAD4 and/or SGA101 is necessary for TNL-mediated effector-triggered immunity. Contributes to nonhost resistance against E.amylovora. Loss of EDS1-PAD4 interaction compromises basal but not TNL-triggered resistance. Necessary for systemic acquired resistance (SAR) signal generation and perception. Has no direct lipase activity. Putative lipase activity is dispensable for immune functions. This Arabidopsis thaliana (Mouse-ear cress) protein is Protein EDS1.